A 149-amino-acid chain; its full sequence is UPF0756 membrane protein MS1439 (149 aa).

4 helical membrane passes run 10 to 32, 56 to 76, 82 to 102, and 126 to 146; these read IMLVVLILLGVLSNNNSITISAL, VGIIILTVGVLAPLVSGKVQL, FLNWQMFLSIVIGIAVAWFAG, and VAFLGGIPVGPLIAAGILAVI.

It belongs to the UPF0756 family.

It localises to the cell membrane. The chain is UPF0756 membrane protein MS1439 from Mannheimia succiniciproducens (strain KCTC 0769BP / MBEL55E).